Consider the following 621-residue polypeptide: ATP-dependent DNA helicase Q1 (621 aa).

A Helicase ATP-binding domain is found at 100-275 (VNATMARKDI…QKILCVEKCL (176 aa)). 113 to 120 (MPTGGGKS) contributes to the ATP binding site. Residues 219 to 222 (DEVH) carry the DEVH box motif. The Helicase C-terminal domain occupies 296-451 (SAEDFIENIA…EMVSYCQNIS (156 aa)). 4 residues coordinate Zn(2+): Cys453, Cys471, Cys475, and Cys478. Lys514 and Lys522 each carry N6-acetyllysine. Ser597 and Ser602 each carry phosphoserine.

This sequence belongs to the helicase family. RecQ subfamily. In terms of assembly, may form homodimers or higher order oligomers. Interacts with EXO1. Interacts with MLH1. Interacts with PARP1. Requires Mg(2+) as cofactor. Mn(2+) is required as a cofactor. Zn(2+) serves as cofactor.

Its subcellular location is the nucleus. The catalysed reaction is Couples ATP hydrolysis with the unwinding of duplex DNA by translocating in the 3'-5' direction.. It carries out the reaction ATP + H2O = ADP + phosphate + H(+). The enzyme catalyses dATP + H2O = dADP + phosphate + H(+). Functionally, DNA helicase that plays a role in DNA damage repair and genome stability. Exhibits a magnesium- and ATP-dependent DNA-helicase activity that unwinds single- and double-stranded DNA in a 3'-5' direction. Plays a role in restoring regressed replication forks. Required to restart stalled replication forks induced by abortive topoisomerase 1 and 2 lesions. May play a role in the repair of DNA that is damaged by ultraviolet light or other mutagens. This Rattus norvegicus (Rat) protein is ATP-dependent DNA helicase Q1 (Recql).